A 389-amino-acid chain; its full sequence is Aspartate aminotransferase (389 aa).

The L-aspartate site is built by G34 and N171. At K233 the chain carries N6-(pyridoxal phosphate)lysine. R362 contacts L-aspartate.

This sequence belongs to the class-I pyridoxal-phosphate-dependent aminotransferase family. As to quaternary structure, homodimer. The cofactor is pyridoxal 5'-phosphate.

The protein resides in the cytoplasm. It catalyses the reaction L-aspartate + 2-oxoglutarate = oxaloacetate + L-glutamate. In Pyrococcus abyssi (strain GE5 / Orsay), this protein is Aspartate aminotransferase (aspC).